We begin with the raw amino-acid sequence, 488 residues long: Probable malate:quinone oxidoreductase (488 aa).

It belongs to the MQO family. The cofactor is FAD.

It carries out the reaction (S)-malate + a quinone = a quinol + oxaloacetate. It functions in the pathway carbohydrate metabolism; tricarboxylic acid cycle; oxaloacetate from (S)-malate (quinone route): step 1/1. The sequence is that of Probable malate:quinone oxidoreductase from Neisseria gonorrhoeae (strain ATCC 700825 / FA 1090).